A 277-amino-acid chain; its full sequence is Thymidylate synthase (277 aa).

Arg-21 contacts dUMP. His-51 lines the (6R)-5,10-methylene-5,6,7,8-tetrahydrofolate pocket. A dUMP-binding site is contributed by 126–127 (RR). Catalysis depends on Cys-159, which acts as the Nucleophile. DUMP-binding positions include 179–182 (RSSD), Asn-190, and 220–222 (HAY). Asp-182 provides a ligand contact to (6R)-5,10-methylene-5,6,7,8-tetrahydrofolate. Ala-276 provides a ligand contact to (6R)-5,10-methylene-5,6,7,8-tetrahydrofolate.

It belongs to the thymidylate synthase family. Bacterial-type ThyA subfamily. As to quaternary structure, homodimer.

The protein resides in the cytoplasm. It carries out the reaction dUMP + (6R)-5,10-methylene-5,6,7,8-tetrahydrofolate = 7,8-dihydrofolate + dTMP. The protein operates within pyrimidine metabolism; dTTP biosynthesis. Catalyzes the reductive methylation of 2'-deoxyuridine-5'-monophosphate (dUMP) to 2'-deoxythymidine-5'-monophosphate (dTMP) while utilizing 5,10-methylenetetrahydrofolate (mTHF) as the methyl donor and reductant in the reaction, yielding dihydrofolate (DHF) as a by-product. This enzymatic reaction provides an intracellular de novo source of dTMP, an essential precursor for DNA biosynthesis. This Pseudomonas fluorescens (strain SBW25) protein is Thymidylate synthase.